Here is a 96-residue protein sequence, read N- to C-terminus: MRHYEVMVILDPDLEERSVSPLIENFLSVVRDGGGKVEKVDTWGRRRLSYEIKKKPEGIYSVIDLQAEPAVVKELDRQMNLNESVLRTKVLRPEMH.

Belongs to the bacterial ribosomal protein bS6 family.

Functionally, binds together with bS18 to 16S ribosomal RNA. This Streptomyces coelicolor (strain ATCC BAA-471 / A3(2) / M145) protein is Small ribosomal subunit protein bS6 (rpsF).